The sequence spans 823 residues: Molybdenum cofactor sulfurase (823 aa).

At Lys228 the chain carries N6-(pyridoxal phosphate)lysine. The active site involves Cys392. The segment at 628 to 667 (SSTRLAEPRRGLGSRKSPLRPAMPGAFPQDTPTPEAERNP) is disordered. Residues 644-819 (SPLRPAMPGA…VMVGDVVTPS (176 aa)) form the MOSC domain.

It belongs to the class-V pyridoxal-phosphate-dependent aminotransferase family. MOCOS subfamily. It depends on pyridoxal 5'-phosphate as a cofactor.

The catalysed reaction is Mo-molybdopterin + L-cysteine + AH2 = thio-Mo-molybdopterin + L-alanine + A + H2O. It participates in cofactor biosynthesis; molybdopterin biosynthesis. Sulfurates the molybdenum cofactor. Sulfation of molybdenum is essential for xanthine dehydrogenase (XDH) and aldehyde oxidase (ADO) enzymes in which molybdenum cofactor is liganded by 1 oxygen and 1 sulfur atom in active form. The polypeptide is Molybdenum cofactor sulfurase (Aspergillus niger (strain ATCC MYA-4892 / CBS 513.88 / FGSC A1513)).